The following is a 495-amino-acid chain: ATP synthase subunit alpha, chloroplastic (495 aa).

170–177 (GDRQTGKT) lines the ATP pocket.

It belongs to the ATPase alpha/beta chains family. In terms of assembly, F-type ATPases have 2 components, CF(1) - the catalytic core - and CF(0) - the membrane proton channel. CF(1) has five subunits: alpha(3), beta(3), gamma(1), delta(1), epsilon(1). CF(0) has four main subunits: a, b, b' and c.

It is found in the plastid. It localises to the chloroplast thylakoid membrane. The catalysed reaction is ATP + H2O + 4 H(+)(in) = ADP + phosphate + 5 H(+)(out). Produces ATP from ADP in the presence of a proton gradient across the membrane. The alpha chain is a regulatory subunit. In Cyanidioschyzon merolae (strain NIES-3377 / 10D) (Unicellular red alga), this protein is ATP synthase subunit alpha, chloroplastic.